An 832-amino-acid chain; its full sequence is Subtilisin-like protease SBT2.1 (832 aa).

A signal peptide spans 1–24 (MDESSLVRFVFLLCLVSSSVFCLA). The propeptide at 25–138 (ESDQNATVSS…VVLDFLVEKA (114 aa)) is activation peptide. Residues Asn-29 and Asn-73 are each glycosylated (N-linked (GlcNAc...) asparagine). The 101-residue stretch at 36–136 (VYIVTLKDRP…ENVVLDFLVE (101 aa)) folds into the Inhibitor I9 domain. The Peptidase S8 domain occupies 145–684 (FLGLPRGAWL…SGFVNATAAL (540 aa)). Asp-172 (charge relay system) is an active-site residue. Asn-233 is a glycosylation site (N-linked (GlcNAc...) asparagine). Catalysis depends on His-247, which acts as the Charge relay system. Asn-272, Asn-315, Asn-390, Asn-417, Asn-470, Asn-515, and Asn-522 each carry an N-linked (GlcNAc...) asparagine glycan. The region spanning 408 to 503 (LVLATHALRN…MDIPGILISS (96 aa)) is the PA domain. Residue Ser-609 is the Charge relay system of the active site. Asn-679, Asn-705, Asn-713, Asn-723, Asn-760, and Asn-801 each carry an N-linked (GlcNAc...) asparagine glycan.

This sequence belongs to the peptidase S8 family.

The protein localises to the secreted. The sequence is that of Subtilisin-like protease SBT2.1 from Arabidopsis thaliana (Mouse-ear cress).